A 373-amino-acid polypeptide reads, in one-letter code: Anhydro-N-acetylmuramic acid kinase (373 aa).

12–19 (GTSLDGVD) provides a ligand contact to ATP.

The protein belongs to the anhydro-N-acetylmuramic acid kinase family.

The enzyme catalyses 1,6-anhydro-N-acetyl-beta-muramate + ATP + H2O = N-acetyl-D-muramate 6-phosphate + ADP + H(+). Its pathway is amino-sugar metabolism; 1,6-anhydro-N-acetylmuramate degradation. It functions in the pathway cell wall biogenesis; peptidoglycan recycling. In terms of biological role, catalyzes the specific phosphorylation of 1,6-anhydro-N-acetylmuramic acid (anhMurNAc) with the simultaneous cleavage of the 1,6-anhydro ring, generating MurNAc-6-P. Is required for the utilization of anhMurNAc either imported from the medium or derived from its own cell wall murein, and thus plays a role in cell wall recycling. This is Anhydro-N-acetylmuramic acid kinase from Salmonella paratyphi A (strain ATCC 9150 / SARB42).